The primary structure comprises 410 residues: Regulator of microtubule dynamics protein 2 (410 aa).

A helical transmembrane segment spans residues 10 to 27 (ILGIVVGTAGISLLLLWY). Residues 71-109 (RQLQILEKLNELLTHMEELKEEIRVLKEAIPKLEEYIQG) are a coiled coil. A Phosphoserine modification is found at Ser-121. Residues 122 to 131 (PQHRARKRRL) are compositionally biased toward basic residues. The segment at 122–153 (PQHRARKRRLATVQSSATSNSSEEAESEGGYV) is disordered. The residue at position 139 (Thr-139) is a Phosphothreonine. Tyr-152 bears the Phosphotyrosine mark. Thr-154 and Thr-157 each carry phosphothreonine.

The protein belongs to the RMDN family. Interacts with microtubules.

The protein resides in the membrane. The protein localises to the cytoplasm. Its subcellular location is the cytoskeleton. It is found in the spindle. It localises to the spindle pole. In Bos taurus (Bovine), this protein is Regulator of microtubule dynamics protein 2 (RMDN2).